Here is a 383-residue protein sequence, read N- to C-terminus: Succinyl-diaminopimelate desuccinylase (383 aa).

H73 is a Zn(2+) binding site. D75 is a catalytic residue. A Zn(2+)-binding site is contributed by D107. The Proton acceptor role is filled by E141. Zn(2+) contacts are provided by E142, E170, and H356.

It belongs to the peptidase M20A family. DapE subfamily. Homodimer. Zn(2+) serves as cofactor. Requires Co(2+) as cofactor.

The catalysed reaction is N-succinyl-(2S,6S)-2,6-diaminopimelate + H2O = (2S,6S)-2,6-diaminopimelate + succinate. The protein operates within amino-acid biosynthesis; L-lysine biosynthesis via DAP pathway; LL-2,6-diaminopimelate from (S)-tetrahydrodipicolinate (succinylase route): step 3/3. Its function is as follows. Catalyzes the hydrolysis of N-succinyl-L,L-diaminopimelic acid (SDAP), forming succinate and LL-2,6-diaminopimelate (DAP), an intermediate involved in the bacterial biosynthesis of lysine and meso-diaminopimelic acid, an essential component of bacterial cell walls. This chain is Succinyl-diaminopimelate desuccinylase, found in Pseudomonas aeruginosa (strain ATCC 15692 / DSM 22644 / CIP 104116 / JCM 14847 / LMG 12228 / 1C / PRS 101 / PAO1).